The sequence spans 527 residues: Metal transporter Nramp6 (527 aa).

Transmembrane regions (helical) follow at residues 38 to 58, 71 to 91, 115 to 135, 143 to 163, 173 to 193, 221 to 241, 264 to 284, 321 to 341, 364 to 384, 385 to 405, 427 to 447, and 458 to 478; these read FFSYLGPGFLVSIAYIDPGNF, ELLWIILVASCAALVIQSLAA, FMLWVVAEIAVVACDIPEVIG, LFNIPVWIGVLLTGLSTLILL, LEFLIAFLVFTIALCFFVELH, ISLLGAMVMPHNLFLHSALVL, GLALMVAFLINVSVISVSGAV, LFAIALLASGQSSTITGTYAG, CLAIIPSLIVALIGGSAGAGK, LIIIASMILSFELPFALVPLL, TWIIGGLIMGINIYYLVSSFI, and VAIVFLGVLGFSGIATYLAAI.

The protein belongs to the NRAMP (TC 2.A.55) family. In terms of tissue distribution, expressed in the vascular bundles of shoots, cotyledons, young leaves, sepals and petals, at the top of the flower stem and in the style. Expressed in the peduncle of developing siliques as well as in the septum and the funiculi.

It is found in the endomembrane system. Probable intracellular cadmium (Cd) transporter that participates in the distribution or availability of Cd within the cell. This is Metal transporter Nramp6 (NRAMP6) from Arabidopsis thaliana (Mouse-ear cress).